The chain runs to 330 residues: Aspartate--ammonia ligase (330 aa).

The protein belongs to the class-II aminoacyl-tRNA synthetase family. AsnA subfamily.

The protein resides in the cytoplasm. It carries out the reaction L-aspartate + NH4(+) + ATP = L-asparagine + AMP + diphosphate + H(+). The protein operates within amino-acid biosynthesis; L-asparagine biosynthesis; L-asparagine from L-aspartate (ammonia route): step 1/1. The protein is Aspartate--ammonia ligase of Haemophilus ducreyi (strain 35000HP / ATCC 700724).